The chain runs to 226 residues: ATP synthase subunit a (226 aa).

6 helical membrane passes run 18–38, 79–99, 105–125, 134–154, 179–199, and 201–221; these read FITGFFVVLTAVLMFFISLGA, LAGTIALYVFFSNMIGIIPGF, SWSFTLVLALIVFFYYHFEGI, FAHFAGPVKWLAPFMFPIEII, LIMLLLVPWAVPVAPFMVLFF, and GILQAFVFMILTYVYLAGAVL.

It belongs to the ATPase A chain family. In terms of assembly, F-type ATPases have 2 components, CF(1) - the catalytic core - and CF(0) - the membrane proton channel. CF(1) has five subunits: alpha(3), beta(3), gamma(1), delta(1), epsilon(1). CF(0) has three main subunits: a(1), b(2) and c(9-12). The alpha and beta chains form an alternating ring which encloses part of the gamma chain. CF(1) is attached to CF(0) by a central stalk formed by the gamma and epsilon chains, while a peripheral stalk is formed by the delta and b chains.

Its subcellular location is the cell inner membrane. Key component of the proton channel; it plays a direct role in the translocation of protons across the membrane. The polypeptide is ATP synthase subunit a (Helicobacter pylori (strain J99 / ATCC 700824) (Campylobacter pylori J99)).